Consider the following 80-residue polypeptide: FXYD domain-containing ion transport regulator 7 (80 aa).

Residues methionine 1 to tyrosine 22 are Extracellular-facing. O-linked (GlcNAc) threonine glycans are attached at residues threonine 3, threonine 5, and threonine 9. The helical transmembrane segment at alanine 23–isoleucine 45 threads the bilayer. Topologically, residues serine 46–valine 80 are cytoplasmic. The segment at serine 56 to valine 80 is disordered. Position 73 is a phosphoserine (serine 73).

The protein belongs to the FXYD family. Regulatory subunit of the sodium/potassium-transporting ATPase which is composed of a catalytic alpha subunit, a non-catalytic beta subunit and an additional regulatory subunit. The regulatory subunit, a member of the FXYD protein family, modulates the enzymatic activity in a tissue- and isoform-specific way by changing affinities of the Na+/K+-ATPase toward Na(+), K(+) or ATP. In terms of processing, O-glycosylated; required for stabilization and translocation to the plasma membrane. As to expression, expressed specifically in brain. Expressed in both neurons and glia.

It is found in the cell membrane. In terms of biological role, associates with and regulates the activity of the sodium/potassium-transporting ATPase (NKA) which catalyzes the hydrolysis of ATP coupled with the exchange of Na(+) and K(+) ions across the plasma membrane. Reduces the apparent affinity for external K(+), an effect that depends on the presence of external Na(+) and voltage. Increases the apparent affinity for intracellular Na(+). The protein is FXYD domain-containing ion transport regulator 7 (Fxyd7) of Rattus norvegicus (Rat).